Reading from the N-terminus, the 188-residue chain is Segregation and condensation protein B (188 aa).

Belongs to the ScpB family. In terms of assembly, homodimer. Homodimerization may be required to stabilize the binding of ScpA to the Smc head domains. Component of a cohesin-like complex composed of ScpA, ScpB and the Smc homodimer, in which ScpA and ScpB bind to the head domain of Smc. The presence of the three proteins is required for the association of the complex with DNA.

Its subcellular location is the cytoplasm. Functionally, participates in chromosomal partition during cell division. May act via the formation of a condensin-like complex containing Smc and ScpA that pull DNA away from mid-cell into both cell halves. The protein is Segregation and condensation protein B of Lactococcus lactis subsp. lactis (strain IL1403) (Streptococcus lactis).